A 41-amino-acid chain; its full sequence is Large ribosomal subunit protein bL36 (41 aa).

It belongs to the bacterial ribosomal protein bL36 family.

The polypeptide is Large ribosomal subunit protein bL36 (Maricaulis maris (strain MCS10) (Caulobacter maris)).